Consider the following 200-residue polypeptide: 7-methyl-GTP pyrophosphatase (200 aa).

Catalysis depends on Asp-75, which acts as the Proton acceptor.

Belongs to the Maf family. YceF subfamily. It depends on a divalent metal cation as a cofactor.

The protein resides in the cytoplasm. It catalyses the reaction N(7)-methyl-GTP + H2O = N(7)-methyl-GMP + diphosphate + H(+). Functionally, nucleoside triphosphate pyrophosphatase that hydrolyzes 7-methyl-GTP (m(7)GTP). May have a dual role in cell division arrest and in preventing the incorporation of modified nucleotides into cellular nucleic acids. This is 7-methyl-GTP pyrophosphatase from Hydrogenovibrio crunogenus (strain DSM 25203 / XCL-2) (Thiomicrospira crunogena).